The following is a 145-amino-acid chain: Protein SprT-like (145 aa).

In terms of domain architecture, SprT-like spans 5–141 (DYVREVSLAD…CGRCHGRLIK (137 aa)). Zn(2+) is bound at residue histidine 64. Glutamate 65 is an active-site residue. Histidine 68 lines the Zn(2+) pocket.

It belongs to the SprT family. The cofactor is Zn(2+).

Its subcellular location is the cytoplasm. This Streptococcus equi subsp. zooepidemicus (strain H70) protein is Protein SprT-like.